Reading from the N-terminus, the 89-residue chain is Small ribosomal subunit protein uS15 (89 aa).

The protein belongs to the universal ribosomal protein uS15 family. As to quaternary structure, part of the 30S ribosomal subunit. Forms a bridge to the 50S subunit in the 70S ribosome, contacting the 23S rRNA.

Its function is as follows. One of the primary rRNA binding proteins, it binds directly to 16S rRNA where it helps nucleate assembly of the platform of the 30S subunit by binding and bridging several RNA helices of the 16S rRNA. In terms of biological role, forms an intersubunit bridge (bridge B4) with the 23S rRNA of the 50S subunit in the ribosome. The protein is Small ribosomal subunit protein uS15 of Staphylococcus aureus (strain JH1).